The sequence spans 208 residues: FMN-dependent NADH:quinone oxidoreductase (208 aa).

FMN-binding positions include 17 to 19 (SNS), 99 to 102 (MWNL), and 143 to 146 (SRGG).

This sequence belongs to the azoreductase type 1 family. In terms of assembly, homodimer. FMN serves as cofactor.

It carries out the reaction 2 a quinone + NADH + H(+) = 2 a 1,4-benzosemiquinone + NAD(+). It catalyses the reaction N,N-dimethyl-1,4-phenylenediamine + anthranilate + 2 NAD(+) = 2-(4-dimethylaminophenyl)diazenylbenzoate + 2 NADH + 2 H(+). In terms of biological role, quinone reductase that provides resistance to thiol-specific stress caused by electrophilic quinones. Also exhibits azoreductase activity. Catalyzes the reductive cleavage of the azo bond in aromatic azo compounds to the corresponding amines. The protein is FMN-dependent NADH:quinone oxidoreductase of Staphylococcus aureus (strain Mu50 / ATCC 700699).